The chain runs to 385 residues: Rubredoxin-NAD(+) reductase (385 aa).

FAD is bound by residues 8-11, 32-33, isoleucine 79, glutamate 156, aspartate 275, and isoleucine 293; these read AGTA and SR.

It belongs to the FAD-dependent oxidoreductase family. As to quaternary structure, homodimer. The cofactor is FAD.

The protein localises to the cytoplasm. It carries out the reaction 2 reduced [rubredoxin] + NAD(+) + H(+) = 2 oxidized [rubredoxin] + NADH. The protein operates within hydrocarbon metabolism; alkane degradation. Its function is as follows. Involved in the hydrocarbon hydroxylating system, which transfers electrons from NADH to rubredoxin reductase and then through rubredoxin to alkane 1 monooxygenase. The protein is Rubredoxin-NAD(+) reductase (alkT) of Pseudomonas putida (Arthrobacter siderocapsulatus).